The chain runs to 469 residues: Adenosylhomocysteinase (469 aa).

3 residues coordinate substrate: T60, D135, and E195. 196-198 contacts NAD(+); sequence TTT. 2 residues coordinate substrate: K225 and D229. NAD(+) is bound by residues N230, 259–264, E282, N317, 338–340, and N383; these read GYGDVG and IGH.

It belongs to the adenosylhomocysteinase family. NAD(+) serves as cofactor.

It localises to the cytoplasm. The enzyme catalyses S-adenosyl-L-homocysteine + H2O = L-homocysteine + adenosine. It functions in the pathway amino-acid biosynthesis; L-homocysteine biosynthesis; L-homocysteine from S-adenosyl-L-homocysteine: step 1/1. Functionally, may play a key role in the regulation of the intracellular concentration of adenosylhomocysteine. The protein is Adenosylhomocysteinase of Maricaulis maris (strain MCS10) (Caulobacter maris).